A 450-amino-acid chain; its full sequence is Tubulin alpha-3C chain (450 aa).

The MREC motif signature appears at 1–4 (MREC). Position 11 (Q11) interacts with GTP. N6-acetyllysine is present on K40. 7 residues coordinate GTP: E71, S140, G144, T145, T179, N206, and N228. E71 is a binding site for Mg(2+). E254 is a catalytic residue. Y282 is subject to 3'-nitrotyrosine. S439 carries the phosphoserine modification. Y450 is subject to 3'-nitrotyrosine.

This sequence belongs to the tubulin family. In terms of assembly, dimer of alpha and beta chains. A typical microtubule is a hollow water-filled tube with an outer diameter of 25 nm and an inner diameter of 15 nM. Alpha-beta heterodimers associate head-to-tail to form protofilaments running lengthwise along the microtubule wall with the beta-tubulin subunit facing the microtubule plus end conferring a structural polarity. Microtubules usually have 13 protofilaments but different protofilament numbers can be found in some organisms and specialized cells. It depends on Mg(2+) as a cofactor. Post-translationally, some glutamate residues at the C-terminus are polyglutamylated, resulting in polyglutamate chains on the gamma-carboxyl group. Polyglutamylation plays a key role in microtubule severing by spastin (SPAST). SPAST preferentially recognizes and acts on microtubules decorated with short polyglutamate tails: severing activity by SPAST increases as the number of glutamates per tubulin rises from one to eight, but decreases beyond this glutamylation threshold. Glutamylation is also involved in cilia motility. In terms of processing, some glutamate residues at the C-terminus are monoglycylated but not polyglycylated due to the absence of functional TTLL10 in human. Monoglycylation is mainly limited to tubulin incorporated into cilia and flagella axonemes, which is required for their stability and maintenance. Flagella glycylation controls sperm motility. Both polyglutamylation and monoglycylation can coexist on the same protein on adjacent residues, and lowering glycylation levels increases polyglutamylation, and reciprocally. Acetylation of alpha chains at Lys-40 is located inside the microtubule lumen. This modification has been correlated with increased microtubule stability, intracellular transport and ciliary assembly. Post-translationally, methylation of alpha chains at Lys-40 is found in mitotic microtubules and is required for normal mitosis and cytokinesis contributing to genomic stability. In terms of processing, nitration of Tyr-450 is irreversible and interferes with normal dynein intracellular distribution. Undergoes a tyrosination/detyrosination cycle, the cyclic removal and re-addition of a C-terminal tyrosine residue by the enzymes tubulin tyrosine carboxypeptidase (MATCAP1/KIAA0895L, VASH1 or VASH2) and tubulin tyrosine ligase (TTL), respectively. Post-translationally, tyrosination promotes microtubule interaction with CAP-Gly domain-containing proteins such as CLIP1, CLIP2 and DCTN1. Tyrosination regulates the initiation of dynein-dynactin motility via interaction with DCTN1, which brings the dynein-dynactin complex into contact with microtubules. In neurons, tyrosinated tubulins mediate the initiation of retrograde vesicle transport. In terms of processing, detyrosination is involved in metaphase plate congression by guiding chromosomes during mitosis: detyrosination promotes interaction with CENPE, promoting pole-proximal transport of chromosomes toward the equator. Detyrosination increases microtubules-dependent mechanotransduction in dystrophic cardiac and skeletal muscle. In cardiomyocytes, detyrosinated microtubules are required to resist to contractile compression during contraction: detyrosination promotes association with desmin (DES) at force-generating sarcomeres, leading to buckled microtubules and mechanical resistance to contraction. As to expression, expressed in testis.

It is found in the cytoplasm. The protein localises to the cytoskeleton. The catalysed reaction is GTP + H2O = GDP + phosphate + H(+). In terms of biological role, tubulin is the major constituent of microtubules, a cylinder consisting of laterally associated linear protofilaments composed of alpha- and beta-tubulin heterodimers. Microtubules grow by the addition of GTP-tubulin dimers to the microtubule end, where a stabilizing cap forms. Below the cap, tubulin dimers are in GDP-bound state, owing to GTPase activity of alpha-tubulin. The sequence is that of Tubulin alpha-3C chain (TUBA3C) from Homo sapiens (Human).